Reading from the N-terminus, the 179-residue chain is Large ribosomal subunit protein uL5 (179 aa).

It belongs to the universal ribosomal protein uL5 family. As to quaternary structure, part of the 50S ribosomal subunit; part of the 5S rRNA/L5/L18/L25 subcomplex. Contacts the 5S rRNA and the P site tRNA. Forms a bridge to the 30S subunit in the 70S ribosome.

Functionally, this is one of the proteins that bind and probably mediate the attachment of the 5S RNA into the large ribosomal subunit, where it forms part of the central protuberance. In the 70S ribosome it contacts protein S13 of the 30S subunit (bridge B1b), connecting the 2 subunits; this bridge is implicated in subunit movement. Contacts the P site tRNA; the 5S rRNA and some of its associated proteins might help stabilize positioning of ribosome-bound tRNAs. In Buchnera aphidicola subsp. Cinara cedri (strain Cc), this protein is Large ribosomal subunit protein uL5.